We begin with the raw amino-acid sequence, 196 residues long: Molybdenum cofactor guanylyltransferase (196 aa).

GTP-binding positions include 14–16 (LAG), Lys-27, Asp-73, and Asp-106. Asp-106 provides a ligand contact to Mg(2+).

Belongs to the MobA family. In terms of assembly, monomer. Requires Mg(2+) as cofactor.

Its subcellular location is the cytoplasm. It carries out the reaction Mo-molybdopterin + GTP + H(+) = Mo-molybdopterin guanine dinucleotide + diphosphate. Transfers a GMP moiety from GTP to Mo-molybdopterin (Mo-MPT) cofactor (Moco or molybdenum cofactor) to form Mo-molybdopterin guanine dinucleotide (Mo-MGD) cofactor. The sequence is that of Molybdenum cofactor guanylyltransferase from Acidiphilium cryptum (strain JF-5).